Reading from the N-terminus, the 194-residue chain is Probable GTP-binding protein EngB (194 aa).

The 172-residue stretch at 23–194 (DKMEFAFVGR…LNFMEEKLNN (172 aa)) folds into the EngB-type G domain. Residues 31-38 (GRSNVGKS), 58-62 (GRTQL), 76-79 (DLPG), 142-145 (TKID), and 173-175 (HSS) each bind GTP. S38 and T60 together coordinate Mg(2+).

This sequence belongs to the TRAFAC class TrmE-Era-EngA-EngB-Septin-like GTPase superfamily. EngB GTPase family. It depends on Mg(2+) as a cofactor.

In terms of biological role, necessary for normal cell division and for the maintenance of normal septation. This chain is Probable GTP-binding protein EngB, found in Fusobacterium nucleatum subsp. nucleatum (strain ATCC 25586 / DSM 15643 / BCRC 10681 / CIP 101130 / JCM 8532 / KCTC 2640 / LMG 13131 / VPI 4355).